The sequence spans 425 residues: Sensor histidine kinase NarS (425 aa).

Helical transmembrane passes span 42–62 (IASVLRIGVVGLMVAAMVVGT), 71–91 (IVLIGVYAVAALWALLLAYSA), 107–127 (LEPFAFTAVDVLILTGFQLLS), 130–150 (GIYPLLIMILLPVLVGLDVST), 155–175 (VVLACTLVGFAVAVLGDPVML), and 181–201 (PETIFRFALYAFLCATALMVV). Residues 224-425 (QTMTASEVLQ…HVCVELPLKR (202 aa)) form the Histidine kinase domain. His241 bears the Phosphohistidine; by autocatalysis mark.

In terms of processing, autophosphorylated on His-241.

The protein localises to the cell membrane. The enzyme catalyses ATP + protein L-histidine = ADP + protein N-phospho-L-histidine.. In terms of biological role, member of the two-component regulatory system NarS/NarL involved in gene expression during aerobic nitrate metabolism. Plays therefore a crucial role in anaerobic survival of mycobacteria in host. Functions as a sensor protein kinase which is autophosphorylated at a histidine residue and transfers its phosphate group to the conserved aspartic acid residue in the regulatory domain of NarL. In turn, NarL binds to the upstream promoter regions of target genes to regulate their expression during aerobic nitrate metabolism. In Mycobacterium tuberculosis (strain ATCC 25618 / H37Rv), this protein is Sensor histidine kinase NarS.